The sequence spans 174 residues: MKREQKAQIIEELAGKLRENSVVLVDYQGMDVAQSTELRRRSREAGVDFVVAKNTLTLRAAEEAGLPSLTEFLVGPTALAFSRDPVAAAKLMAEYADEIETFRLKGGLLEGSRVLNEQEVEALSKLPGRDQLIAQVVGGMAAPISGLVSVLNNTIQGLVVALGQIAEQKQAQQA.

It belongs to the universal ribosomal protein uL10 family. As to quaternary structure, part of the ribosomal stalk of the 50S ribosomal subunit. The N-terminus interacts with L11 and the large rRNA to form the base of the stalk. The C-terminus forms an elongated spine to which L12 dimers bind in a sequential fashion forming a multimeric L10(L12)X complex.

Its function is as follows. Forms part of the ribosomal stalk, playing a central role in the interaction of the ribosome with GTP-bound translation factors. The sequence is that of Large ribosomal subunit protein uL10 from Rubrobacter xylanophilus (strain DSM 9941 / JCM 11954 / NBRC 16129 / PRD-1).